The chain runs to 79 residues: Putative defensin-like protein 203 (79 aa).

The first 27 residues, 1–27, serve as a signal peptide directing secretion; that stretch reads MAKLIVNFSALLMIILLVSNGLPKAVA. Intrachain disulfides connect cysteine 30–cysteine 79, cysteine 40–cysteine 64, cysteine 49–cysteine 73, and cysteine 53–cysteine 75.

This sequence belongs to the DEFL family.

Its subcellular location is the secreted. The sequence is that of Putative defensin-like protein 203 from Arabidopsis thaliana (Mouse-ear cress).